The following is a 265-amino-acid chain: MRIGLFDSGIGGFTVLKKVIKLCPNNSFIYLADTARLPYGIKTTNEIKKIAEEISSWFRYQKIDAFLVACNTTNAIALDILKKNLDIPVFDLIGSAASTIQESRVGVLATPSTVKTKAYTNAILEFKPKTFVIEQPCPAFVPMIEMDNINSDDITDVATGYLQPLLKQKIHSLILGCSHYPLIAPSLRKVLPSSVKLIDPAEALSFKLKLFIDSKTSNYSKNKNFVDLKFYVTSNLKHFPNKAKHWLNVFPEVNLVSLQKKGWVS.

Substrate-binding positions include 7-8 (DS) and 39-40 (YG). Cys-70 functions as the Proton donor/acceptor in the catalytic mechanism. Substrate is bound at residue 71 to 72 (NT). The active-site Proton donor/acceptor is Cys-177.

This sequence belongs to the aspartate/glutamate racemases family.

It carries out the reaction L-glutamate = D-glutamate. It participates in cell wall biogenesis; peptidoglycan biosynthesis. Functionally, provides the (R)-glutamate required for cell wall biosynthesis. The polypeptide is Glutamate racemase (Prochlorococcus marinus (strain NATL2A)).